Reading from the N-terminus, the 260-residue chain is Hemin import ATP-binding protein HmuV (260 aa).

The ABC transporter domain maps to 2–239; sequence IRAENITLIR…ETIARVYGIG (238 aa). Residue 34 to 41 coordinates ATP; sequence GPNGAGKS.

It belongs to the ABC transporter superfamily. Heme (hemin) importer (TC 3.A.1.14.5) family. In terms of assembly, the complex is composed of two ATP-binding proteins (HmuV), two transmembrane proteins (HmuU) and a solute-binding protein (HmuT).

It localises to the cell inner membrane. Part of the ABC transporter complex HmuTUV involved in hemin import. Responsible for energy coupling to the transport system. The protein is Hemin import ATP-binding protein HmuV of Agrobacterium fabrum (strain C58 / ATCC 33970) (Agrobacterium tumefaciens (strain C58)).